Here is a 457-residue protein sequence, read N- to C-terminus: Multidrug resistance protein MdtK (457 aa).

12 helical membrane passes run 11 to 31, 53 to 73, 93 to 113, 127 to 147, 160 to 180, 191 to 211, 243 to 263, 276 to 296, 316 to 336, 357 to 377, 387 to 407, and 418 to 438; these read LLAL…MGFV, IWLP…PVVA, WLAG…GYII, AVGY…FQVA, GMVM…IFIY, VGCG…MLWW, LPIA…ALLV, IALN…AAVT, RTGV…TVLM, LMLL…GSGI, IFFI…YLLA, and PAGF…MMML.

This sequence belongs to the multi antimicrobial extrusion (MATE) (TC 2.A.66.1) family. MdtK subfamily.

It is found in the cell inner membrane. Functionally, multidrug efflux pump that functions probably as a Na(+)/drug antiporter. The chain is Multidrug resistance protein MdtK from Klebsiella pneumoniae subsp. pneumoniae (strain ATCC 700721 / MGH 78578).